Consider the following 208-residue polypeptide: FMN-dependent NADH:quinone oxidoreductase 2 (208 aa).

An FMN-binding site is contributed by serine 17 to serine 19.

Belongs to the azoreductase type 1 family. Homodimer. It depends on FMN as a cofactor.

The catalysed reaction is 2 a quinone + NADH + H(+) = 2 a 1,4-benzosemiquinone + NAD(+). It carries out the reaction N,N-dimethyl-1,4-phenylenediamine + anthranilate + 2 NAD(+) = 2-(4-dimethylaminophenyl)diazenylbenzoate + 2 NADH + 2 H(+). Quinone reductase that provides resistance to thiol-specific stress caused by electrophilic quinones. Functionally, also exhibits azoreductase activity. Catalyzes the reductive cleavage of the azo bond in aromatic azo compounds to the corresponding amines. The polypeptide is FMN-dependent NADH:quinone oxidoreductase 2 (Halalkalibacterium halodurans (strain ATCC BAA-125 / DSM 18197 / FERM 7344 / JCM 9153 / C-125) (Bacillus halodurans)).